The sequence spans 445 residues: Exodeoxyribonuclease 7 large subunit (445 aa).

The protein belongs to the XseA family. In terms of assembly, heterooligomer composed of large and small subunits.

The protein resides in the cytoplasm. The enzyme catalyses Exonucleolytic cleavage in either 5'- to 3'- or 3'- to 5'-direction to yield nucleoside 5'-phosphates.. In terms of biological role, bidirectionally degrades single-stranded DNA into large acid-insoluble oligonucleotides, which are then degraded further into small acid-soluble oligonucleotides. This chain is Exodeoxyribonuclease 7 large subunit, found in Shewanella halifaxensis (strain HAW-EB4).